Consider the following 165-residue polypeptide: Growth arrest and DNA damage-inducible protein GADD45 alpha (165 aa).

The residue at position 2 (T2) is a Phosphothreonine.

This sequence belongs to the GADD45 family. In terms of assembly, interacts with AURKA, PCNA, GADD45GIP1 and MAPK14.

Its subcellular location is the nucleus. In terms of biological role, might affect PCNA interaction with some CDK (cell division protein kinase) complexes; stimulates DNA excision repair in vitro and inhibits entry of cells into S phase. In T-cells, functions as a regulator of p38 MAPKs by inhibiting p88 phosphorylation and activity. This chain is Growth arrest and DNA damage-inducible protein GADD45 alpha (GADD45A), found in Bos taurus (Bovine).